A 203-amino-acid polypeptide reads, in one-letter code: Glycerol-3-phosphate acyltransferase (203 aa).

The next 4 helical transmembrane spans lie at 1–21, 84–104, 117–137, and 157–179; these read MIQTAFTALLLLAIGYLLGAI, WLQVLTGLAALAGHIWPVWLG, IFLGLAWPVGLACFGLFMAVI, and LMLLSGSSSAYVVVSLVASLMVL.

Belongs to the PlsY family. In terms of assembly, probably interacts with PlsX.

Its subcellular location is the cell inner membrane. The catalysed reaction is an acyl phosphate + sn-glycerol 3-phosphate = a 1-acyl-sn-glycero-3-phosphate + phosphate. It participates in lipid metabolism; phospholipid metabolism. Functionally, catalyzes the transfer of an acyl group from acyl-phosphate (acyl-PO(4)) to glycerol-3-phosphate (G3P) to form lysophosphatidic acid (LPA). This enzyme utilizes acyl-phosphate as fatty acyl donor, but not acyl-CoA or acyl-ACP. The chain is Glycerol-3-phosphate acyltransferase from Synechococcus sp. (strain CC9605).